A 184-amino-acid chain; its full sequence is Thymidine kinase (184 aa).

ATP-binding positions include 10–17 and 83–86; these read GPMYSGKT and DEVQ. The Proton acceptor role is filled by Glu-84. Zn(2+) contacts are provided by Cys-140, Cys-143, Cys-173, and Cys-176.

The protein belongs to the thymidine kinase family. As to quaternary structure, homotetramer.

The protein localises to the cytoplasm. The catalysed reaction is thymidine + ATP = dTMP + ADP + H(+). This chain is Thymidine kinase, found in Thermotoga sp. (strain RQ2).